We begin with the raw amino-acid sequence, 158 residues long: Transcription elongation factor GreA (158 aa).

The stretch at 47 to 74 (AEYHAAKEEQSHNEGRIAELEDKLARAD) forms a coiled coil.

This sequence belongs to the GreA/GreB family.

Functionally, necessary for efficient RNA polymerase transcription elongation past template-encoded arresting sites. The arresting sites in DNA have the property of trapping a certain fraction of elongating RNA polymerases that pass through, resulting in locked ternary complexes. Cleavage of the nascent transcript by cleavage factors such as GreA or GreB allows the resumption of elongation from the new 3'terminus. GreA releases sequences of 2 to 3 nucleotides. In Nitrobacter winogradskyi (strain ATCC 25391 / DSM 10237 / CIP 104748 / NCIMB 11846 / Nb-255), this protein is Transcription elongation factor GreA.